The sequence spans 125 residues: Small ribosomal subunit protein uS13 (125 aa).

Residues 93–125 (RKGLPVRGQRTKTNARTRKGPKRTVAGKKKAGR) form a disordered region.

Belongs to the universal ribosomal protein uS13 family. As to quaternary structure, part of the 30S ribosomal subunit. Forms a loose heterodimer with protein S19. Forms two bridges to the 50S subunit in the 70S ribosome.

Functionally, located at the top of the head of the 30S subunit, it contacts several helices of the 16S rRNA. In the 70S ribosome it contacts the 23S rRNA (bridge B1a) and protein L5 of the 50S subunit (bridge B1b), connecting the 2 subunits; these bridges are implicated in subunit movement. Contacts the tRNAs in the A and P-sites. This chain is Small ribosomal subunit protein uS13, found in Paenarthrobacter aurescens (strain TC1).